Consider the following 548-residue polypeptide: Probable 5-epi-aristolochene synthase 4 (548 aa).

5 residues coordinate Mg(2+): Asp301, Asp305, Asp444, Thr448, and Glu452. The DDXXD motif signature appears at 301–305 (DDTFD).

It belongs to the terpene synthase family. As to quaternary structure, monomer. Mg(2+) serves as cofactor.

Its subcellular location is the cytoplasm. The catalysed reaction is (2E,6E)-farnesyl diphosphate = (+)-5-epi-aristolochene + diphosphate. The protein operates within secondary metabolite biosynthesis; terpenoid biosynthesis. Functionally, catalyzes the cyclization of trans,trans-farnesyl diphosphate (FPP) to the bicyclic intermediate 5-epi-aristolochene, initial step in the conversion of FPP to the sesquiterpenoid antifungal phytoalexin capsidiol. Produces germacrene A as an enzyme-bound intermediate that is not released by the enzyme, but is further cyclized to produce the bicyclic 5-epi-aristolochene. The chain is Probable 5-epi-aristolochene synthase 4 from Nicotiana attenuata (Coyote tobacco).